Consider the following 466-residue polypeptide: Soluble pyridine nucleotide transhydrogenase (466 aa).

36 to 45 provides a ligand contact to FAD; sequence ERYQNVGGGC.

Belongs to the class-I pyridine nucleotide-disulfide oxidoreductase family. Requires FAD as cofactor.

It is found in the cytoplasm. It carries out the reaction NAD(+) + NADPH = NADH + NADP(+). Functionally, conversion of NADPH, generated by peripheral catabolic pathways, to NADH, which can enter the respiratory chain for energy generation. The protein is Soluble pyridine nucleotide transhydrogenase of Escherichia fergusonii (strain ATCC 35469 / DSM 13698 / CCUG 18766 / IAM 14443 / JCM 21226 / LMG 7866 / NBRC 102419 / NCTC 12128 / CDC 0568-73).